A 147-amino-acid polypeptide reads, in one-letter code: METLTAISRWLAKQHVVTWCVQQEGELWCANAFYLFDAQKVAFYILTEEKTRHAQMSGPQAAIAGTVNGQPKTVALIRGVQFKGEIRRLEGEESDLARKAYNRRFPVARMLSAPVWEIRLDEIKFTDNTLGFGKKMIWLRNSGTEQA.

The protein belongs to the UPF0306 family.

The sequence is that of UPF0306 protein YhbP from Escherichia coli O1:K1 / APEC.